The chain runs to 415 residues: MTNLNYTPTIWTRADALKVNENDPTTTQPIVDADFPVMSDEVFIWDTMPLRSLDGTVVSVDGWSVIFTLTAQRNNNNSEYLDAEGNYDITSDWNNRHGRARICYWYSRTGKDWIFGGRVMAEGVSPTSREWAGTPILLNEDGDIDLYYTCVTPGATIAKVRGKVLTSEEGVTLAGFNEVKSLFSADGVYYQTESQNPYWNFRDPSPFIDPHDGKLYMVFEGNVAGERGSHVIGKQEMGTLPPGHRDVGNARYQAGCIGMAVAKDLSGDEWEILPPLVTAVGVNDQTERPHFVFQDGKYYLFTISHKFTYADGLTGPDGVYGFLSDNLTGPYSPMNGSGLVLGNPPSQPFQTYSHCVMPNGLVTSFIDNVPTSDGNYRIGGTEAPTVKIVLKGNRSFVERVFDYGYIPPMKNIILN.

Sucrose is bound by residues W45, D46, A132, R202, and D203. D46 acts as the Nucleophile in catalysis. The Proton donor/acceptor role is filled by E287.

It belongs to the glycosyl hydrolase 68 family.

It catalyses the reaction [6)-beta-D-fructofuranosyl-(2-&gt;](n) alpha-D-glucopyranoside + sucrose = [6)-beta-D-fructofuranosyl-(2-&gt;](n+1) alpha-D-glucopyranoside + D-glucose. Functionally, catalyzes the synthesis of levan, a fructose polymer, by transferring the fructosyl moiety from sucrose to a growing acceptor molecule. In Rahnella aquatilis (strain ATCC 33071 / DSM 4594 / JCM 1683 / NBRC 105701 / NCIMB 13365 / CIP 78.65), this protein is Levansucrase.